A 345-amino-acid polypeptide reads, in one-letter code: Calcium/calmodulin-dependent protein kinase type 1 (345 aa).

The disordered stretch occupies residues Met1 to Lys23. The region spanning Tyr31–Ile287 is the Protein kinase domain. ATP is bound by residues Leu37–Val45 and Lys61. Asp153 acts as the Proton acceptor in catalysis. Residues Ile287–Met327 form an autoinhibitory domain region. Residues Lys307–Arg328 are calmodulin-binding.

It belongs to the protein kinase superfamily. CAMK Ser/Thr protein kinase family. CaMK subfamily. In terms of tissue distribution, highly expressed in hepatopancreas and to a lesser extent in gills. Low expression in hemocytes, testis, ovary, heart, eyestalk, muscle and epidermis.

It catalyses the reaction L-seryl-[protein] + ATP = O-phospho-L-seryl-[protein] + ADP + H(+). It carries out the reaction L-threonyl-[protein] + ATP = O-phospho-L-threonyl-[protein] + ADP + H(+). With respect to regulation, activated by Ca(2+)/calmodulin. Binding of calmodulin results in conformational change that relieves intrasteric autoinhibition. Calcium/calmodulin-dependent protein kinase that operates in the calcium-triggered CaMKK-CaMK1 signaling cascade and, upon calcium influx, regulates transcription activators activity, cell cycle, hormone production, cell differentiation, actin filament organization and neurite outgrowth. Involved in molting. The polypeptide is Calcium/calmodulin-dependent protein kinase type 1 (Macrobrachium nipponense (Oriental river shrimp)).